A 433-amino-acid polypeptide reads, in one-letter code: FAD-dependent monooxygenase notI' (433 aa).

Residues Glu-45 and Arg-117 each coordinate FAD. Arg-195 is an active-site residue. FAD is bound by residues Asp-314 and Ala-327.

This sequence belongs to the paxM FAD-dependent monooxygenase family. Requires FAD as cofactor.

Its pathway is alkaloid biosynthesis. Its function is as follows. FAD-dependent monooxygenase; part of the gene cluster that mediates the biosynthesis of notoamide, a fungal indole alkaloid that belongs to a family of natural products containing a characteristic bicyclo[2.2.2]diazaoctane core. The first step of notoamide biosynthesis involves coupling of L-proline and L-tryptophan by the bimodular NRPS notE', to produce cyclo-L-tryptophan-L-proline called brevianamide F. The reverse prenyltransferase notF' then acts as a deoxybrevianamide E synthase and converts brevianamide F to deoxybrevianamide E via reverse prenylation at C-2 of the indole ring leading to the bicyclo[2.2.2]diazaoctane core. Deoxybrevianamide E is further hydroxylated at C-6 of the indole ring, likely catalyzed by the cytochrome P450 monooxygenase notG', to yield 6-hydroxy-deoxybrevianamide E. 6-hydroxy-deoxybrevianamide E is a specific substrate of the prenyltransferase notC' for normal prenylation at C-7 to produce 6-hydroxy-7-prenyl-deoxybrevianamide, also called notoamide S. As the proposed pivotal branching point in notoamide biosynthesis, notoamide S can be diverted to notoamide E through an oxidative pyran ring closure putatively catalyzed by either notH' cytochrome P450 monooxygenase or the notD' FAD-linked oxidoreductase. This step would be followed by an indole 2,3-epoxidation-initiated pinacol-like rearrangement catalyzed by the notB' FAD-dependent monooxygenase leading to the formation of notoamide C and notoamide D. On the other hand notoamide S is converted to notoamide T by notH' (or notD'), a bifunctional oxidase that also functions as the intramolecular Diels-Alderase responsible for generation of (-)-notoamide T. To generate antipodal (+)-notoaminide T, notH (or notD) in Aspergillus strain MF297-2 is expected to catalyze a Diels-Alder reaction leading to the opposite stereochemistry. The remaining oxidoreductase notD' (or notH') likely catalyzes the oxidative pyran ring formation to yield (-)-stephacidin A. The FAD-dependent monooxygenase notI' is highly similar to notB' and is predicted to catalyze a similar conversion from (-)-stephacidin A to (+)-notoamide B via the 2,3-epoxidation of (-)-stephacidin A followed by a pinacol-type rearrangement. Finally, it remains unclear which enzyme could be responsible for the final hydroxylation steps leading to notoamide A and sclerotiamide. The polypeptide is FAD-dependent monooxygenase notI' (Aspergillus versicolor).